Consider the following 366-residue polypeptide: ATP-dependent 6-phosphofructokinase 2 (366 aa).

ATP is bound by residues Gly-15, 78–79 (KD), and 119–122 (GDGT). A Mg(2+)-binding site is contributed by Asp-120. Substrate-binding positions include 142-144 (TID), Arg-179, 186-188 (MGR), Glu-239, Arg-284, and 290-293 (HIQR). The Proton acceptor role is filled by Asp-144.

It belongs to the phosphofructokinase type A (PFKA) family. Mixed-substrate PFK group III subfamily. Homodimer or homotetramer. Requires Mg(2+) as cofactor.

It is found in the cytoplasm. The catalysed reaction is beta-D-fructose 6-phosphate + ATP = beta-D-fructose 1,6-bisphosphate + ADP + H(+). It participates in carbohydrate degradation; glycolysis; D-glyceraldehyde 3-phosphate and glycerone phosphate from D-glucose: step 3/4. Subject to allosteric activation by ADP and other diphosphonucleosides, and inhibition by phosphoenolpyruvate. In terms of biological role, catalyzes the phosphorylation of D-fructose 6-phosphate to fructose 1,6-bisphosphate by ATP, the first committing step of glycolysis. This Clostridium perfringens (strain 13 / Type A) protein is ATP-dependent 6-phosphofructokinase 2.